Consider the following 700-residue polypeptide: Elongation factor G 2 (700 aa).

A tr-type G domain is found at 8-290 (ERYRNIGISA…AVLDFLPSPI (283 aa)). GTP-binding positions include 17–24 (AHIDAGKT), 88–92 (DTPGH), and 142–145 (NKMD).

Belongs to the TRAFAC class translation factor GTPase superfamily. Classic translation factor GTPase family. EF-G/EF-2 subfamily.

It is found in the cytoplasm. Functionally, catalyzes the GTP-dependent ribosomal translocation step during translation elongation. During this step, the ribosome changes from the pre-translocational (PRE) to the post-translocational (POST) state as the newly formed A-site-bound peptidyl-tRNA and P-site-bound deacylated tRNA move to the P and E sites, respectively. Catalyzes the coordinated movement of the two tRNA molecules, the mRNA and conformational changes in the ribosome. This chain is Elongation factor G 2, found in Paraburkholderia xenovorans (strain LB400).